The following is a 520-amino-acid chain: Type I restriction enzyme EcoprrI methylase subunit (520 aa).

S-adenosyl-L-methionine-binding positions include 198–203, 230–232, and Glu254; these read EFFTPQ and SGS.

Belongs to the N(4)/N(6)-methyltransferase family. The type I restriction/modification system is composed of three polypeptides R, M and S; the restriction enzyme has stoichiometry R(2)M(2)S(1) while the methyltransferase is M(2)S(1).

It catalyses the reaction a 2'-deoxyadenosine in DNA + S-adenosyl-L-methionine = an N(6)-methyl-2'-deoxyadenosine in DNA + S-adenosyl-L-homocysteine + H(+). The subtype gamma methyltransferase (M) subunit of a type I restriction enzyme. The M and S subunits together form a methyltransferase (MTase) that methylates two adenine residues of the sequence 5'-CCAN(7)ATGC-3'. In the presence of the R subunit the complex can also act as an endonuclease, binding to the same target sequence but cutting the DNA some distance from this site. Whether the DNA is cut or modified depends on the methylation state of the target sequence. When the target site is unmodified, the DNA is cut. When the target site is hemimethylated, the complex acts as a maintenance MTase modifying the DNA so that both strands become methylated. After locating a non-methylated recognition site, the enzyme complex serves as a molecular motor that translocates DNA in an ATP-dependent manner until a collision occurs that triggers cleavage. The sequence is that of Type I restriction enzyme EcoprrI methylase subunit from Escherichia coli.